The chain runs to 113 residues: UPF0212 protein AF_0282 (113 aa).

This sequence belongs to the UPF0212 family.

This is UPF0212 protein AF_0282 from Archaeoglobus fulgidus (strain ATCC 49558 / DSM 4304 / JCM 9628 / NBRC 100126 / VC-16).